We begin with the raw amino-acid sequence, 477 residues long: Secreted RxLR effector protein 102 (477 aa).

The N-terminal stretch at 1–20 (MRGGYYVLTALFVVASSEIA) is a signal peptide. The RxLR-dEER motif lies at 48-65 (RFLRESRGVHGNVANEER). 4 disordered regions span residues 326-345 (SKGQIPYPSEPLNAASTSKG), 351-370 (IKRSKRTSDGNTDIASLPSI), 376-401 (SSKSVMPLLTESTTSGDHSVPAKRSR), and 433-455 (PRSAVDPYTQSKKHSTKALAPSS).

The protein belongs to the RxLR effector family.

The protein resides in the secreted. The protein localises to the host nucleus. Its function is as follows. Secreted effector that acts as an elicitor that induces cell death in host plant cells. The polypeptide is Secreted RxLR effector protein 102 (Plasmopara viticola (Downy mildew of grapevine)).